We begin with the raw amino-acid sequence, 119 residues long: Odin profilin (119 aa).

The protein belongs to the Asgard profilin family.

The protein resides in the cytoplasm. It localises to the cytoskeleton. With respect to regulation, inhibition of rabbit actin polymerization is reduced by phosphatidylinositol-(4,5)-P2(1,2-dipalmitoyl), a soluble form of the phospholipid phosphatidylinositol, suggesting an unknown lipid might regulate actin-profilin interaction in vivo. In terms of biological role, binds to actin and affects the structure of the cytoskeleton. At high concentrations inhibits spontaneous rabbit actin nucleation. This strongly suggests this archaea has a profilin-regulated actin system, and actin-type genes can be identified in this organism. The chain is Odin profilin from Odinarchaeota yellowstonii (strain LCB_4).